The chain runs to 87 residues: Small ribosomal subunit protein bS20 (87 aa).

A disordered region spans residues 1–22; that stretch reads MANSAQARKRARQSVKQRAHNA. A compositionally biased stretch (basic residues) spans 7-19; sequence ARKRARQSVKQRA.

It belongs to the bacterial ribosomal protein bS20 family.

Its function is as follows. Binds directly to 16S ribosomal RNA. This Neisseria gonorrhoeae (strain ATCC 700825 / FA 1090) protein is Small ribosomal subunit protein bS20.